We begin with the raw amino-acid sequence, 259 residues long: UPF0014 membrane protein slr1647 (259 aa).

A run of 7 helical transmembrane segments spans residues 4 to 24, 34 to 54, 55 to 75, 98 to 118, 128 to 148, 195 to 215, and 225 to 245; these read ALIE…GAAI, LTGQ…VVGY, FLAV…LAIM, LWLS…VVII, YLIP…SLAG, MMVV…LAGG, and ILIM…VTAT.

It belongs to the UPF0014 family.

Its subcellular location is the cell membrane. This is UPF0014 membrane protein slr1647 from Synechocystis sp. (strain ATCC 27184 / PCC 6803 / Kazusa).